A 264-amino-acid chain; its full sequence is Ribosomal protein L11 methyltransferase (264 aa).

4 residues coordinate S-adenosyl-L-methionine: Thr-116, Gly-137, Asp-159, and Asn-200.

It belongs to the methyltransferase superfamily. PrmA family.

It is found in the cytoplasm. It carries out the reaction L-lysyl-[protein] + 3 S-adenosyl-L-methionine = N(6),N(6),N(6)-trimethyl-L-lysyl-[protein] + 3 S-adenosyl-L-homocysteine + 3 H(+). Methylates ribosomal protein L11. The protein is Ribosomal protein L11 methyltransferase of Thermotoga neapolitana.